A 261-amino-acid chain; its full sequence is Cytochrome c oxidase subunit 3 (261 aa).

Over M1–P15 the chain is Mitochondrial matrix. Residues W16 to W34 traverse the membrane as a helical segment. The Mitochondrial intermembrane portion of the chain corresponds to F35 to V40. The helical transmembrane segment at T41–T66 threads the bilayer. Residues F67–T72 lie on the Mitochondrial matrix side of the membrane. The helical transmembrane segment at P73–S105 threads the bilayer. The Mitochondrial intermembrane portion of the chain corresponds to L106–E128. Residues V129–M152 traverse the membrane as a helical segment. The Mitochondrial matrix portion of the chain corresponds to E153 to N155. A helical membrane pass occupies residues R156–E183. Residues A184 to D190 lie on the Mitochondrial intermembrane side of the membrane. The helical transmembrane segment at G191 to L223 threads the bilayer. Residues K224–H232 lie on the Mitochondrial matrix side of the membrane. Residues F233 to I256 form a helical membrane-spanning segment. The Mitochondrial intermembrane portion of the chain corresponds to Y257–S261.

The protein belongs to the cytochrome c oxidase subunit 3 family. In terms of assembly, component of the cytochrome c oxidase (complex IV, CIV), a multisubunit enzyme composed of 14 subunits. The complex is composed of a catalytic core of 3 subunits MT-CO1, MT-CO2 and MT-CO3, encoded in the mitochondrial DNA, and 11 supernumerary subunits COX4I, COX5A, COX5B, COX6A, COX6B, COX6C, COX7A, COX7B, COX7C, COX8 and NDUFA4, which are encoded in the nuclear genome. The complex exists as a monomer or a dimer and forms supercomplexes (SCs) in the inner mitochondrial membrane with NADH-ubiquinone oxidoreductase (complex I, CI) and ubiquinol-cytochrome c oxidoreductase (cytochrome b-c1 complex, complex III, CIII), resulting in different assemblies (supercomplex SCI(1)III(2)IV(1) and megacomplex MCI(2)III(2)IV(2)).

Its subcellular location is the mitochondrion inner membrane. The catalysed reaction is 4 Fe(II)-[cytochrome c] + O2 + 8 H(+)(in) = 4 Fe(III)-[cytochrome c] + 2 H2O + 4 H(+)(out). Its function is as follows. Component of the cytochrome c oxidase, the last enzyme in the mitochondrial electron transport chain which drives oxidative phosphorylation. The respiratory chain contains 3 multisubunit complexes succinate dehydrogenase (complex II, CII), ubiquinol-cytochrome c oxidoreductase (cytochrome b-c1 complex, complex III, CIII) and cytochrome c oxidase (complex IV, CIV), that cooperate to transfer electrons derived from NADH and succinate to molecular oxygen, creating an electrochemical gradient over the inner membrane that drives transmembrane transport and the ATP synthase. Cytochrome c oxidase is the component of the respiratory chain that catalyzes the reduction of oxygen to water. Electrons originating from reduced cytochrome c in the intermembrane space (IMS) are transferred via the dinuclear copper A center (CU(A)) of subunit 2 and heme A of subunit 1 to the active site in subunit 1, a binuclear center (BNC) formed by heme A3 and copper B (CU(B)). The BNC reduces molecular oxygen to 2 water molecules using 4 electrons from cytochrome c in the IMS and 4 protons from the mitochondrial matrix. The chain is Cytochrome c oxidase subunit 3 (MT-CO3) from Loxodonta africana (African elephant).